Here is a 134-residue protein sequence, read N- to C-terminus: uncharacterized protein (134 aa).

Positions 10–70 (KETRQRIIDA…AVLASRQHPL (61 aa)) constitute an HTH tetR-type domain. Residues 33-52 (TLDQIARKAGVTRGAVYWHF) constitute a DNA-binding region (H-T-H motif).

In terms of biological role, unknown, does not seem to be involved in regulation of the ttgGHI or ttgVW operons. This is an uncharacterized protein from Pseudomonas putida (strain DOT-T1E).